The chain runs to 201 residues: Recombination protein RecR (201 aa).

The C4-type zinc finger occupies 57 to 74 (CRICGNITENSVNPCAIC). Residues 82-178 (STVFVVENSR…KVTRLAHGLA (97 aa)) form the Toprim domain.

The protein belongs to the RecR family.

In terms of biological role, may play a role in DNA repair. It seems to be involved in an RecBC-independent recombinational process of DNA repair. It may act with RecF and RecO. This chain is Recombination protein RecR, found in Leuconostoc citreum (strain KM20).